The following is a 119-amino-acid chain: Auxin-responsive protein SAUR78 (119 aa).

It belongs to the ARG7 family.

May be involved in the regulation of ethylene receptor signaling. Promotes cell expansion and plant growth. This chain is Auxin-responsive protein SAUR78, found in Arabidopsis thaliana (Mouse-ear cress).